Reading from the N-terminus, the 101-residue chain is NADH-ubiquinone oxidoreductase chain 5 (101 aa).

3 helical membrane passes run I12–I32, F48–F68, and L79–I99.

The protein belongs to the complex I subunit 5 family.

It is found in the mitochondrion inner membrane. The catalysed reaction is a ubiquinone + NADH + 5 H(+)(in) = a ubiquinol + NAD(+) + 4 H(+)(out). Core subunit of the mitochondrial membrane respiratory chain NADH dehydrogenase (Complex I) that is believed to belong to the minimal assembly required for catalysis. Complex I functions in the transfer of electrons from NADH to the respiratory chain. The immediate electron acceptor for the enzyme is believed to be ubiquinone. The chain is NADH-ubiquinone oxidoreductase chain 5 (ND5) from Leishmania tarentolae (Sauroleishmania tarentolae).